Consider the following 358-residue polypeptide: NADH-quinone oxidoreductase subunit H (358 aa).

8 consecutive transmembrane segments (helical) span residues 30–50, 96–116, 129–149, 168–188, 201–221, 265–285, 297–317, and 336–356; these read IAVG…LIYM, FLYN…FACI, VGVF…LLAG, IISY…LMGT, GWFI…YLIA, FIVA…LHII, IPGF…LMWI, and YLVP…AFGF.

This sequence belongs to the complex I subunit 1 family. In terms of assembly, NDH-1 is composed of 14 different subunits. Subunits NuoA, H, J, K, L, M, N constitute the membrane sector of the complex.

Its subcellular location is the cell inner membrane. It carries out the reaction a quinone + NADH + 5 H(+)(in) = a quinol + NAD(+) + 4 H(+)(out). In terms of biological role, NDH-1 shuttles electrons from NADH, via FMN and iron-sulfur (Fe-S) centers, to quinones in the respiratory chain. The immediate electron acceptor for the enzyme in this species is believed to be ubiquinone. Couples the redox reaction to proton translocation (for every two electrons transferred, four hydrogen ions are translocated across the cytoplasmic membrane), and thus conserves the redox energy in a proton gradient. This subunit may bind ubiquinone. This Bacteroides thetaiotaomicron (strain ATCC 29148 / DSM 2079 / JCM 5827 / CCUG 10774 / NCTC 10582 / VPI-5482 / E50) protein is NADH-quinone oxidoreductase subunit H.